Consider the following 107-residue polypeptide: MASIIYSPKDIFEQEFKTSMSGFNKKEVDEFLDNVIQDYETYISEIEELKAEIERLKNQNTHPKSPSTENRHAMVQPTRVAQSATNFDILKRISRLEKEVFGKQITE.

Positions 32-65 form a coiled coil; the sequence is LDNVIQDYETYISEIEELKAEIERLKNQNTHPKS. The interval 57–80 is disordered; sequence KNQNTHPKSPSTENRHAMVQPTRV. The segment covering 58 to 68 has biased composition (polar residues); sequence NQNTHPKSPST.

It belongs to the GpsB family. As to quaternary structure, forms polymers through the coiled coil domains. Interacts with PBP1, MreC and EzrA.

The protein localises to the cytoplasm. Functionally, divisome component that associates with the complex late in its assembly, after the Z-ring is formed, and is dependent on DivIC and PBP2B for its recruitment to the divisome. Together with EzrA, is a key component of the system that regulates PBP1 localization during cell cycle progression. Its main role could be the removal of PBP1 from the cell pole after pole maturation is completed. Also contributes to the recruitment of PBP1 to the division complex. Not essential for septum formation. This is Cell cycle protein GpsB from Streptococcus uberis (strain ATCC BAA-854 / 0140J).